Consider the following 1625-residue polypeptide: Nonribosomal peptide synthetase aclP (1625 aa).

The Carrier 1 domain occupies 47–123 (TTMNPSSQLL…ALFTDLLSSE (77 aa)). O-(pantetheine 4'-phosphoryl)serine is present on Ser84. A disordered region spans residues 127–157 (IPIPDPSDDSDDLSNPSSSTGGSPRVATPIS). The segment at 286 to 567 (ASSQSTVIWA…KYFQRALQLL (282 aa)) is condensation 1. An adenylation region spans residues 614-997 (FESAVSRNPM…GRTDRQIKLR (384 aa)). Positions 1096-1171 (SPMEKLVGDA…HLAAAIDSGL (76 aa)) constitute a Carrier 2 domain. Ser1131 carries the post-translational modification O-(pantetheine 4'-phosphoryl)serine. Positions 1195 to 1585 (EWWHKYQINE…LQARIPLALS (391 aa)) are condensation 2.

The protein belongs to the NRP synthetase family.

It participates in mycotoxin biosynthesis. Its function is as follows. Nonribosomal peptide synthetase; part of the gene cluster that mediates the biosynthesis of aspirochlorine (or antibiotic A30641), an unusual halogenated spiro compound with distinctive antifungal properties due to selective inhibition of protein biosynthesis, and which is also active against bacteria, viruses, and murine tumor cells. The non-ribosomal peptide synthetase (NRPS) aclP is responsible the formation of the diketopiperazine (DKP) core from the condensation of 2 phenylalanine residues. One Phe residue is tailored into chlorotyrosine by hydroxylation and chlorination, whereas the second Phe undergoes an unprecedented C-C bond cleavage to be converted into glycine. After formation of the DKP, sulfur is incorporated into the DKP by conjugation with glutathione by aclG, followed by its stepwise degradation to the thiol by aclI, aclJ and aclK, and the dithiol oxidation by aclT. In addition, oxygenases (aclB, aclC, aclL and aclO) and O-methyltransferases (aclM and aclU) act as tailoring enzymes to produce the intermediate dechloroaspirochlorine. Ultimately, chlorination of dechloroaspirochlorine by the halogenase aclH is the last step in the aspirochlorine pathway. The polypeptide is Nonribosomal peptide synthetase aclP (Aspergillus oryzae (strain ATCC 42149 / RIB 40) (Yellow koji mold)).